The chain runs to 312 residues: Porphobilinogen deaminase (312 aa).

Cysteine 241 bears the S-(dipyrrolylmethanemethyl)cysteine mark.

It belongs to the HMBS family. Monomer. The cofactor is dipyrromethane.

It catalyses the reaction 4 porphobilinogen + H2O = hydroxymethylbilane + 4 NH4(+). It functions in the pathway porphyrin-containing compound metabolism; protoporphyrin-IX biosynthesis; coproporphyrinogen-III from 5-aminolevulinate: step 2/4. Functionally, tetrapolymerization of the monopyrrole PBG into the hydroxymethylbilane pre-uroporphyrinogen in several discrete steps. The polypeptide is Porphobilinogen deaminase (Cytophaga hutchinsonii (strain ATCC 33406 / DSM 1761 / CIP 103989 / NBRC 15051 / NCIMB 9469 / D465)).